Consider the following 461-residue polypeptide: Bifunctional protein HldE (461 aa).

Positions 1–312 (MLEFLSQQKP…IKSFNRVDFE (312 aa)) are ribokinase. 191 to 194 (NKKE) contributes to the ATP binding site. The active site involves Asp-259. The tract at residues 334-461 (FTNGCFDIVH…KIIEKIKDKK (128 aa)) is cytidylyltransferase.

It in the N-terminal section; belongs to the carbohydrate kinase PfkB family. The protein in the C-terminal section; belongs to the cytidylyltransferase family. As to quaternary structure, homodimer.

The enzyme catalyses D-glycero-beta-D-manno-heptose 7-phosphate + ATP = D-glycero-beta-D-manno-heptose 1,7-bisphosphate + ADP + H(+). The catalysed reaction is D-glycero-beta-D-manno-heptose 1-phosphate + ATP + H(+) = ADP-D-glycero-beta-D-manno-heptose + diphosphate. The protein operates within nucleotide-sugar biosynthesis; ADP-L-glycero-beta-D-manno-heptose biosynthesis; ADP-L-glycero-beta-D-manno-heptose from D-glycero-beta-D-manno-heptose 7-phosphate: step 1/4. Its pathway is nucleotide-sugar biosynthesis; ADP-L-glycero-beta-D-manno-heptose biosynthesis; ADP-L-glycero-beta-D-manno-heptose from D-glycero-beta-D-manno-heptose 7-phosphate: step 3/4. Catalyzes the phosphorylation of D-glycero-D-manno-heptose 7-phosphate at the C-1 position to selectively form D-glycero-beta-D-manno-heptose-1,7-bisphosphate. In terms of biological role, catalyzes the ADP transfer from ATP to D-glycero-beta-D-manno-heptose 1-phosphate, yielding ADP-D-glycero-beta-D-manno-heptose. This chain is Bifunctional protein HldE, found in Campylobacter jejuni subsp. doylei (strain ATCC BAA-1458 / RM4099 / 269.97).